A 253-amino-acid polypeptide reads, in one-letter code: Hydroxyacylglutathione hydrolase (253 aa).

Zn(2+) is bound by residues His59, His61, Asp63, His64, His118, Asp143, and His181.

This sequence belongs to the metallo-beta-lactamase superfamily. Glyoxalase II family. As to quaternary structure, monomer. Zn(2+) serves as cofactor.

It carries out the reaction an S-(2-hydroxyacyl)glutathione + H2O = a 2-hydroxy carboxylate + glutathione + H(+). It participates in secondary metabolite metabolism; methylglyoxal degradation; (R)-lactate from methylglyoxal: step 2/2. Functionally, thiolesterase that catalyzes the hydrolysis of S-D-lactoyl-glutathione to form glutathione and D-lactic acid. The protein is Hydroxyacylglutathione hydrolase of Prochlorococcus marinus (strain MIT 9211).